Consider the following 457-residue polypeptide: Bifunctional protein GlmU (457 aa).

The tract at residues 1–229 is pyrophosphorylase; it reads MYNCAIILAA…YEEIMGVNSR (229 aa). Residues 8 to 11, Lys22, Gln73, and 78 to 79 contribute to the UDP-N-acetyl-alpha-D-glucosamine site; these read LAAG and GT. Asp103 contributes to the Mg(2+) binding site. Positions 140, 155, 170, and 227 each coordinate UDP-N-acetyl-alpha-D-glucosamine. Residue Asn227 coordinates Mg(2+). The tract at residues 230–250 is linker; it reads VQLSEAEIVMRKRINHKHMVN. The N-acetyltransferase stretch occupies residues 251–457; sequence GVTFIDCEST…WLDKKGLLKK (207 aa). Positions 332 and 350 each coordinate UDP-N-acetyl-alpha-D-glucosamine. The Proton acceptor role is filled by His362. The UDP-N-acetyl-alpha-D-glucosamine site is built by Tyr365 and Asn376. Residues 385–386, Ala422, and Arg439 each bind acetyl-CoA; that span reads NY.

The protein in the N-terminal section; belongs to the N-acetylglucosamine-1-phosphate uridyltransferase family. In the C-terminal section; belongs to the transferase hexapeptide repeat family. Homotrimer. Requires Mg(2+) as cofactor.

It localises to the cytoplasm. The enzyme catalyses alpha-D-glucosamine 1-phosphate + acetyl-CoA = N-acetyl-alpha-D-glucosamine 1-phosphate + CoA + H(+). It catalyses the reaction N-acetyl-alpha-D-glucosamine 1-phosphate + UTP + H(+) = UDP-N-acetyl-alpha-D-glucosamine + diphosphate. It functions in the pathway nucleotide-sugar biosynthesis; UDP-N-acetyl-alpha-D-glucosamine biosynthesis; N-acetyl-alpha-D-glucosamine 1-phosphate from alpha-D-glucosamine 6-phosphate (route II): step 2/2. Its pathway is nucleotide-sugar biosynthesis; UDP-N-acetyl-alpha-D-glucosamine biosynthesis; UDP-N-acetyl-alpha-D-glucosamine from N-acetyl-alpha-D-glucosamine 1-phosphate: step 1/1. The protein operates within bacterial outer membrane biogenesis; LPS lipid A biosynthesis. In terms of biological role, catalyzes the last two sequential reactions in the de novo biosynthetic pathway for UDP-N-acetylglucosamine (UDP-GlcNAc). The C-terminal domain catalyzes the transfer of acetyl group from acetyl coenzyme A to glucosamine-1-phosphate (GlcN-1-P) to produce N-acetylglucosamine-1-phosphate (GlcNAc-1-P), which is converted into UDP-GlcNAc by the transfer of uridine 5-monophosphate (from uridine 5-triphosphate), a reaction catalyzed by the N-terminal domain. In Clostridium botulinum (strain ATCC 19397 / Type A), this protein is Bifunctional protein GlmU.